A 290-amino-acid polypeptide reads, in one-letter code: Ribosomal RNA small subunit methyltransferase A (290 aa).

S-adenosyl-L-methionine is bound by residues N27, L29, G54, E75, D100, and N125.

The protein belongs to the class I-like SAM-binding methyltransferase superfamily. rRNA adenine N(6)-methyltransferase family. RsmA subfamily.

The protein localises to the cytoplasm. The enzyme catalyses adenosine(1518)/adenosine(1519) in 16S rRNA + 4 S-adenosyl-L-methionine = N(6)-dimethyladenosine(1518)/N(6)-dimethyladenosine(1519) in 16S rRNA + 4 S-adenosyl-L-homocysteine + 4 H(+). Its function is as follows. Specifically dimethylates two adjacent adenosines (A1518 and A1519) in the loop of a conserved hairpin near the 3'-end of 16S rRNA in the 30S particle. May play a critical role in biogenesis of 30S subunits. In Streptococcus pneumoniae (strain ATCC 700669 / Spain 23F-1), this protein is Ribosomal RNA small subunit methyltransferase A.